A 446-amino-acid polypeptide reads, in one-letter code: 5-hydroxytryptamine receptor (446 aa).

Residues 1 to 65 (MEGAEGQEEL…AALVRAAAKA (65 aa)) lie on the Extracellular side of the membrane. 4 N-linked (GlcNAc...) asparagine glycosylation sites follow: Asn-23, Asn-27, Asn-36, and Asn-42. A helical transmembrane segment spans residues 66–88 (VVLGLLILATVVGNVFVIAAILL). The Cytoplasmic portion of the chain corresponds to 89–98 (ERHLRSAANN). A helical membrane pass occupies residues 99-120 (LILSLAVADLLVACLVMPLGAV). Topologically, residues 121 to 135 (YEVVQRWTLGPELCD) are extracellular. A disulfide bridge connects residues Cys-134 and Cys-214. Residues 136-157 (MWTSGDVLCCTASILHLVAIAL) traverse the membrane as a helical segment. At 158–176 (DRYWAVTNIDYIHASTAKR) the chain is on the cytoplasmic side. Residues 177–199 (VGMMIACVWTVSFFVCIAQLLGW) form a helical membrane-spanning segment. Residues 200 to 227 (KDPDWNQRVSEDLRCVVSQDVGYQIFAT) are Extracellular-facing. A helical membrane pass occupies residues 228–249 (ASSFYVPVLIILILYWRIYQTA). Over 250–367 (RKRIRRRRGA…SKRERKAAKT (118 aa)) the chain is Cytoplasmic. Polar residues predominate over residues 304–324 (TTTGFTNVSSNNTSPEKQSCA). The disordered stretch occupies residues 304–329 (TTTGFTNVSSNNTSPEKQSCANGLEA). A helical membrane pass occupies residues 368–391 (LAIITGAFVACWLPFFVLAILVPT). The Extracellular portion of the chain corresponds to 392-399 (CDCEVSPV). The chain crosses the membrane as a helical span at residues 400–422 (LTSLSLWLGYFNSTLNPVIYTVF). The Cytoplasmic segment spans residues 423-446 (SPEFRHAFQRLLCGRRVRRRRAPQ).

This sequence belongs to the G-protein coupled receptor 1 family.

It is found in the cell membrane. Its function is as follows. This is a receptor for 5-hydroxytryptamine (serotonin), a biogenic hormone that function as a neurotransmitter, a hormone, and a mitogen. The polypeptide is 5-hydroxytryptamine receptor (Bombyx mori (Silk moth)).